Consider the following 324-residue polypeptide: Major capsid protein (324 aa).

A propeptide spanning residues 1–14 (MEQTQKLKLNLQHF) is cleaved from the precursor.

The protein belongs to the HK97 phage major capsid protein family. In terms of assembly, forms homopentamers and homohexamers in the mature capsid forming a 63 nm icosahedral head with T=7 architecture. The procapsid is made up of hexamers and pentamers of this subunit. There are seven subunits in the asymmetric unit in the T=7 procapsid. Found in the procapsid with the scaffold protein in a 2:1 capsid protein:scaffold protein molecular ratio. The N-terminus is cleaved by ribosomal processing protease Prp.

The protein localises to the virion. Assembles to form an icosahedral capsid, as well as procapsid, with T=7 icosahedral symmetry. This chain is Major capsid protein, found in Staphylococcus aureus.